We begin with the raw amino-acid sequence, 918 residues long: Alpha-scruin (918 aa).

Kelch repeat units lie at residues 82–133 (VVLA…YFHR), 134–187 (RVYV…VMDE), 188–235 (RIFV…NNEG), 237–289 (IYVI…TQNK), 291–341 (IWIW…KTGA), and 342–390 (HVFI…AIPA). Residues 398–427 (EVPTSTPSSKAKPQPGSKPTSVKYKKQPDI) are disordered. An IQ domain is found at 430–459 (RNEAAKKVQRRWRRYIEQKSITKRMQQGDS). Kelch repeat units lie at residues 590–641 (VIIG…YYRS), 642–695 (AIYI…VFND), 696–743 (VLYA…AHGG), 745–795 (IWLL…VCDN), 797–849 (IWLC…ALES), and 851–898 (LYIA…TIPP).

As to expression, sperm.

Actin bundling protein found in the acrosomal sperm process. The polypeptide is Alpha-scruin (Limulus polyphemus (Atlantic horseshoe crab)).